The primary structure comprises 428 residues: D-amino acid dehydrogenase (428 aa).

3 to 17 serves as a coordination point for FAD; it reads VVILGSGVVGVASAY.

Belongs to the DadA oxidoreductase family. FAD is required as a cofactor.

It catalyses the reaction a D-alpha-amino acid + A + H2O = a 2-oxocarboxylate + AH2 + NH4(+). Its pathway is amino-acid degradation; D-alanine degradation; NH(3) and pyruvate from D-alanine: step 1/1. In terms of biological role, oxidative deamination of D-amino acids. This is D-amino acid dehydrogenase from Burkholderia thailandensis (strain ATCC 700388 / DSM 13276 / CCUG 48851 / CIP 106301 / E264).